Here is a 222-residue protein sequence, read N- to C-terminus: Protein-L-isoaspartate O-methyltransferase (222 aa).

Residue Ser-68 is part of the active site.

It belongs to the methyltransferase superfamily. L-isoaspartyl/D-aspartyl protein methyltransferase family.

The protein resides in the cytoplasm. It carries out the reaction [protein]-L-isoaspartate + S-adenosyl-L-methionine = [protein]-L-isoaspartate alpha-methyl ester + S-adenosyl-L-homocysteine. In terms of biological role, catalyzes the methyl esterification of L-isoaspartyl residues in peptides and proteins that result from spontaneous decomposition of normal L-aspartyl and L-asparaginyl residues. It plays a role in the repair and/or degradation of damaged proteins. The chain is Protein-L-isoaspartate O-methyltransferase from Koribacter versatilis (strain Ellin345).